A 525-amino-acid polypeptide reads, in one-letter code: uncharacterized protein (525 aa).

2 helical membrane-spanning segments follow: residues 36 to 56 (AVAAVSLTALPIVPLALTLAL) and 61 to 81 (ALPAGAALWASASLLAAAAAI). The 56-residue stretch at 173 to 228 (SAVDIRLERTSADGPQFAHIYCEMTPLRDAEGNLLAIVAQSRDVSEEARLQAEAAA) folds into the PAC domain. In terms of domain architecture, Histidine kinase spans 246-466 (AVSHELRTPL…VIVVTIPSDA (221 aa)). His249 bears the Phosphohistidine; by autocatalysis mark. The disordered stretch occupies residues 506–525 (LHTGEIGREGGHGAAQAKTA).

The protein resides in the cell membrane. The catalysed reaction is ATP + protein L-histidine = ADP + protein N-phospho-L-histidine.. This is an uncharacterized protein from Rhizobium meliloti (strain 1021) (Ensifer meliloti).